A 168-amino-acid chain; its full sequence is Pathogenesis-related protein 1B (168 aa).

The N-terminal stretch at 1-30 (MGFFLFSQMPSFFLVSTLLLFLIISHSSHA) is a signal peptide. The SCP domain maps to 38 to 156 (LDAHNTARAD…NGGYVVSCNY (119 aa)).

The protein belongs to the CRISP family. Three disulfide bonds are present.

It localises to the vacuole. Functionally, probably involved in the defense reaction of plants against pathogens. In Nicotiana tabacum (Common tobacco), this protein is Pathogenesis-related protein 1B.